The sequence spans 504 residues: Lysine--tRNA ligase (504 aa).

E411 and E418 together coordinate Mg(2+).

This sequence belongs to the class-II aminoacyl-tRNA synthetase family. Homodimer. Mg(2+) serves as cofactor.

The protein localises to the cytoplasm. The catalysed reaction is tRNA(Lys) + L-lysine + ATP = L-lysyl-tRNA(Lys) + AMP + diphosphate. This Clostridium botulinum (strain Okra / Type B1) protein is Lysine--tRNA ligase.